A 198-amino-acid polypeptide reads, in one-letter code: Outer-membrane lipoprotein carrier protein (198 aa).

The signal sequence occupies residues 1–17 (MKKFLFSLCLLSSTVLA).

This sequence belongs to the LolA family. In terms of assembly, monomer.

It localises to the periplasm. Functionally, participates in the translocation of lipoproteins from the inner membrane to the outer membrane. Only forms a complex with a lipoprotein if the residue after the N-terminal Cys is not an aspartate (The Asp acts as a targeting signal to indicate that the lipoprotein should stay in the inner membrane). The polypeptide is Outer-membrane lipoprotein carrier protein (Aliivibrio fischeri (strain ATCC 700601 / ES114) (Vibrio fischeri)).